Here is a 266-residue protein sequence, read N- to C-terminus: Tryptophan synthase alpha chain (266 aa).

Active-site proton acceptor residues include glutamate 51 and aspartate 62.

Belongs to the TrpA family. As to quaternary structure, tetramer of two alpha and two beta chains.

It catalyses the reaction (1S,2R)-1-C-(indol-3-yl)glycerol 3-phosphate + L-serine = D-glyceraldehyde 3-phosphate + L-tryptophan + H2O. The protein operates within amino-acid biosynthesis; L-tryptophan biosynthesis; L-tryptophan from chorismate: step 5/5. In terms of biological role, the alpha subunit is responsible for the aldol cleavage of indoleglycerol phosphate to indole and glyceraldehyde 3-phosphate. The protein is Tryptophan synthase alpha chain of Prochlorococcus marinus (strain NATL1A).